Reading from the N-terminus, the 610-residue chain is MVRMDLSRIRNFSIIAHVDHGKSTLADRILELTHAVSDREMREQFLDSLELERERGITIKASAVRVTYRAKDGEEYVFHLIDTPGHVDFTYEVSRALAAVEGVLLVVDASQGVEAETLAKFYMALEHGHVIIPVINKIDLPNARPLEVALEVEEVLGLPADEAIFASGKTGEGVEEILEAIVQRIPPPKGDPEAPLKALIFDSVYDAYQGVIPYLRLFEGRVRPGDRIRIYSTGKEFTVDKVGVFTPQGLVATEALEAGEVGWLVAAIRDIHDVQVGDTITLADRPTPSPYPGFRPAKPVVFAGLYPVDSGDYGKLRDALEKLKLNDAALTFEPESSTALGFGFRCGFLGLLHAEIVQERLEREFGLSLIATAPSVVYKVRLKSGEEVEVHNPADLPDPTRIEEILEPYVKLTIFTPEEYVGSLMQLLQEKRGRLVNMNYLPGAQKRVELVYEAPFAEILYDFHDRLKSVSRGYASMDYEQAGYRPGDLVKVNVLVHGEVVDALTFIAHREKAYTMARAIVDKLAEVIPRQLFEVPIQAAIGGKIIARATVKALRKDVLAKCYGGDVTRKKKLLEKQKEGKKRLKAIGKVEVPQEAFLAVLSAGRDEPKG.

One can recognise a tr-type G domain in the interval 7–189 (SRIRNFSIIA…AIVQRIPPPK (183 aa)). Residues 19-24 (DHGKST) and 136-139 (NKID) contribute to the GTP site.

It belongs to the TRAFAC class translation factor GTPase superfamily. Classic translation factor GTPase family. LepA subfamily.

The protein resides in the cell inner membrane. It carries out the reaction GTP + H2O = GDP + phosphate + H(+). In terms of biological role, required for accurate and efficient protein synthesis under certain stress conditions. May act as a fidelity factor of the translation reaction, by catalyzing a one-codon backward translocation of tRNAs on improperly translocated ribosomes. Back-translocation proceeds from a post-translocation (POST) complex to a pre-translocation (PRE) complex, thus giving elongation factor G a second chance to translocate the tRNAs correctly. Binds to ribosomes in a GTP-dependent manner. This chain is Elongation factor 4, found in Thermus thermophilus (strain ATCC 27634 / DSM 579 / HB8).